The primary structure comprises 119 residues: Nascent polypeptide-associated complex protein (119 aa).

The region spanning 5–73 is the NAC-A/B domain; that stretch reads RMNSREMRRL…MREVPKEPEE (69 aa).

The protein belongs to the NAC-alpha family. In terms of assembly, homodimer. Interacts with the ribosome. Binds ribosomal RNA.

In terms of biological role, contacts the emerging nascent chain on the ribosome. The protein is Nascent polypeptide-associated complex protein of Thermoplasma acidophilum (strain ATCC 25905 / DSM 1728 / JCM 9062 / NBRC 15155 / AMRC-C165).